We begin with the raw amino-acid sequence, 375 residues long: Riboflavin biosynthesis protein RibD (375 aa).

The interval 1 to 150 is deaminase; that stretch reads MEVLSEQQLF…QPYLYQRERG (150 aa). A CMP/dCMP-type deaminase domain is found at 6–127; that stretch reads EQQLFFMRKA…ARLQAAGIPV (122 aa). His55 contributes to the Zn(2+) binding site. Glu57 (proton donor) is an active-site residue. Residues Cys80 and Cys89 each contribute to the Zn(2+) site. Positions 151 to 375 are reductase; the sequence is LPWVVMKTAA…LEQESVDKKG (225 aa). Position 159 (Ala159) interacts with NADP(+). A substrate-binding site is contributed by Ser173. Trp175 contributes to the NADP(+) binding site. Arg189 contacts substrate. Thr201 and Asp205 together coordinate NADP(+). 2 residues coordinate substrate: Leu209 and Arg212. Ser230 lines the NADP(+) pocket. A substrate-binding site is contributed by Glu299. 301 to 307 lines the NADP(+) pocket; that stretch reads GAQLHSA.

It in the N-terminal section; belongs to the cytidine and deoxycytidylate deaminase family. The protein in the C-terminal section; belongs to the HTP reductase family. Requires Zn(2+) as cofactor.

The enzyme catalyses 2,5-diamino-6-hydroxy-4-(5-phosphoribosylamino)-pyrimidine + H2O + H(+) = 5-amino-6-(5-phospho-D-ribosylamino)uracil + NH4(+). It carries out the reaction 5-amino-6-(5-phospho-D-ribitylamino)uracil + NADP(+) = 5-amino-6-(5-phospho-D-ribosylamino)uracil + NADPH + H(+). It functions in the pathway cofactor biosynthesis; riboflavin biosynthesis; 5-amino-6-(D-ribitylamino)uracil from GTP: step 2/4. The protein operates within cofactor biosynthesis; riboflavin biosynthesis; 5-amino-6-(D-ribitylamino)uracil from GTP: step 3/4. Converts 2,5-diamino-6-(ribosylamino)-4(3h)-pyrimidinone 5'-phosphate into 5-amino-6-(ribosylamino)-2,4(1h,3h)-pyrimidinedione 5'-phosphate. This Chlamydia trachomatis serovar D (strain ATCC VR-885 / DSM 19411 / UW-3/Cx) protein is Riboflavin biosynthesis protein RibD (ribD).